A 198-amino-acid chain; its full sequence is MKVTKADIVISAVKPEQYPDGDLPEIALAGRSNVGKSSFINKILNRKKLVRISSKPGKTQTLNFFLINEMMHFVDVPGYGYAKVSKTERAAWGKMIETYFTTREQLDAAVLVVDLRHKPTNDDVMMYDFLKHYDIPTIIIATKADKIPKGKWQKHLKVVKETLDIESGDEVVLFSSETGLGKEEAWKAIHKFTKTKNA.

The 174-residue stretch at 22–195 folds into the EngB-type G domain; sequence DLPEIALAGR…WKAIHKFTKT (174 aa). GTP is bound by residues 30–37, 57–61, 75–78, 142–145, and 174–176; these read GRSNVGKS, GKTQT, DVPG, TKAD, and FSS. Mg(2+) contacts are provided by Ser37 and Thr59.

Belongs to the TRAFAC class TrmE-Era-EngA-EngB-Septin-like GTPase superfamily. EngB GTPase family. Mg(2+) serves as cofactor.

In terms of biological role, necessary for normal cell division and for the maintenance of normal septation. The protein is Probable GTP-binding protein EngB of Bacillus anthracis (strain A0248).